Reading from the N-terminus, the 391-residue chain is Homocysteine-responsive endoplasmic reticulum-resident ubiquitin-like domain member 1 protein (391 aa).

At Met1 the chain carries N-acetylmethionine. Residues 1–263 are Cytoplasmic-facing; it reads MESETEPEPV…VEEDDEINRD (263 aa). In terms of domain architecture, Ubiquitin-like spans 10 to 72; that stretch reads VTLLVKSPNQ…LLDHQCLRDL (63 aa). The interval 100 to 126 is disordered; sequence KVAESTEEPAGSNRGQYPEDSSSDGLR. Residues 112-124 are compositionally biased toward polar residues; it reads NRGQYPEDSSSDG. An interaction with UBQLN1 region spans residues 115 to 200; the sequence is QYPEDSSSDG…ASGAFVPPPS (86 aa). Position 135 is a phosphoserine (Ser135). Residues 264–284 form a helical membrane-spanning segment; that stretch reads WLDWTYSAATFSVFLSILYFY. Over 285–289 the chain is Lumenal; that stretch reads SSLSR. A helical membrane pass occupies residues 290–310; the sequence is FLMVMGATVVMYLHHVGWFPF. Residues 311-391 are Cytoplasmic-facing; that stretch reads RPRPVQNFPN…LPEGPPAIAN (81 aa). The disordered stretch occupies residues 318-359; sequence FPNDGPPPDIVNQDPNNNLQEGTDPETEDPNHVPPDRGVLDG. Residues 346 to 357 show a composition bias toward basic and acidic residues; that stretch reads DPNHVPPDRGVL.

Interacts with PSEN1 and PSEN2. Interacts with UBXN6. Interacts with UBQLN1, UBQLN2 and UBQLN4. Component of the HRD1 complex, which comprises at least SYNV1/HRD1, FAM8A1, HERPUD1/HERP, OS9, SEL1L and UBE2J1. FAM8A1 binding to SYNV1 may promote recruitment of HERPUD1 to the HRD1 complex.

It is found in the endoplasmic reticulum membrane. Its function is as follows. Component of the endoplasmic reticulum quality control (ERQC) system also called ER-associated degradation (ERAD) involved in ubiquitin-dependent degradation of misfolded endoplasmic reticulum proteins. Binds to ubiquilins and this interaction is required for efficient degradation of CD3D via the ERAD pathway. The sequence is that of Homocysteine-responsive endoplasmic reticulum-resident ubiquitin-like domain member 1 protein (HERPUD1) from Pongo abelii (Sumatran orangutan).